The sequence spans 356 residues: Probable dual-specificity RNA methyltransferase RlmN (356 aa).

Residue glutamate 92 is the Proton acceptor of the active site. Residues 98–336 enclose the Radical SAM core domain; that stretch reads HKYGFSVCVT…CGVRLEHGTD (239 aa). Cysteine 105 and cysteine 341 are oxidised to a cystine. The [4Fe-4S] cluster site is built by cysteine 112, cysteine 116, and cysteine 119. Residues 164–165, serine 196, 219–221, and asparagine 297 each bind S-adenosyl-L-methionine; these read GE and SLH. Catalysis depends on cysteine 341, which acts as the S-methylcysteine intermediate.

It belongs to the radical SAM superfamily. RlmN family. [4Fe-4S] cluster is required as a cofactor.

It localises to the cytoplasm. It catalyses the reaction adenosine(2503) in 23S rRNA + 2 reduced [2Fe-2S]-[ferredoxin] + 2 S-adenosyl-L-methionine = 2-methyladenosine(2503) in 23S rRNA + 5'-deoxyadenosine + L-methionine + 2 oxidized [2Fe-2S]-[ferredoxin] + S-adenosyl-L-homocysteine. The enzyme catalyses adenosine(37) in tRNA + 2 reduced [2Fe-2S]-[ferredoxin] + 2 S-adenosyl-L-methionine = 2-methyladenosine(37) in tRNA + 5'-deoxyadenosine + L-methionine + 2 oxidized [2Fe-2S]-[ferredoxin] + S-adenosyl-L-homocysteine. In terms of biological role, specifically methylates position 2 of adenine 2503 in 23S rRNA and position 2 of adenine 37 in tRNAs. This Shouchella clausii (strain KSM-K16) (Alkalihalobacillus clausii) protein is Probable dual-specificity RNA methyltransferase RlmN.